The chain runs to 291 residues: Phosphatidylglycerol--prolipoprotein diacylglyceryl transferase (291 aa).

7 helical membrane-spanning segments follow: residues 21–41 (VALH…MWLA), 60–80 (LLYA…VLFY), 96–116 (WDGG…MIIF), 130–150 (FIAP…FING), 198–218 (SQLY…NLFI), 225–245 (GAVS…VEFF), and 260–280 (ISMG…MMVW). Position 143 (Arg143) interacts with a 1,2-diacyl-sn-glycero-3-phospho-(1'-sn-glycerol).

This sequence belongs to the Lgt family.

The protein localises to the cell inner membrane. It carries out the reaction L-cysteinyl-[prolipoprotein] + a 1,2-diacyl-sn-glycero-3-phospho-(1'-sn-glycerol) = an S-1,2-diacyl-sn-glyceryl-L-cysteinyl-[prolipoprotein] + sn-glycerol 1-phosphate + H(+). It functions in the pathway protein modification; lipoprotein biosynthesis (diacylglyceryl transfer). Catalyzes the transfer of the diacylglyceryl group from phosphatidylglycerol to the sulfhydryl group of the N-terminal cysteine of a prolipoprotein, the first step in the formation of mature lipoproteins. This Salmonella newport (strain SL254) protein is Phosphatidylglycerol--prolipoprotein diacylglyceryl transferase.